A 139-amino-acid polypeptide reads, in one-letter code: MPTISQLAKGCRVKKTWKSKVPALNMLYNSLHKKELKLSAPFKRGVCTRVATMTPKKPNSALRKFARVKLSNGIEVNAYIPGEGHNLQEHSIVLIRGGKVKDLPGIRYHIVRGTQDTTGVAKRSQGRSKYGAKRPKKSK.

A 3-methylthioaspartic acid modification is found at aspartate 102. Residues 116–139 (DTTGVAKRSQGRSKYGAKRPKKSK) are disordered. Residues 124 to 139 (SQGRSKYGAKRPKKSK) show a composition bias toward basic residues.

This sequence belongs to the universal ribosomal protein uS12 family. In terms of assembly, part of the 30S ribosomal subunit. Contacts proteins S8 and S17. May interact with IF1 in the 30S initiation complex.

Functionally, with S4 and S5 plays an important role in translational accuracy. In terms of biological role, interacts with and stabilizes bases of the 16S rRNA that are involved in tRNA selection in the A site and with the mRNA backbone. Located at the interface of the 30S and 50S subunits, it traverses the body of the 30S subunit contacting proteins on the other side and probably holding the rRNA structure together. The combined cluster of proteins S8, S12 and S17 appears to hold together the shoulder and platform of the 30S subunit. The chain is Small ribosomal subunit protein uS12 from Mesomycoplasma hyopneumoniae (strain 7448) (Mycoplasma hyopneumoniae).